We begin with the raw amino-acid sequence, 111 residues long: Ribonuclease P protein component (111 aa).

Belongs to the RnpA family. As to quaternary structure, consists of a catalytic RNA component (M1 or rnpB) and a protein subunit.

It carries out the reaction Endonucleolytic cleavage of RNA, removing 5'-extranucleotides from tRNA precursor.. Functionally, RNaseP catalyzes the removal of the 5'-leader sequence from pre-tRNA to produce the mature 5'-terminus. It can also cleave other RNA substrates such as 4.5S RNA. The protein component plays an auxiliary but essential role in vivo by binding to the 5'-leader sequence and broadening the substrate specificity of the ribozyme. The polypeptide is Ribonuclease P protein component (Alkaliphilus metalliredigens (strain QYMF)).